Consider the following 520-residue polypeptide: 2-isopropylmalate synthase (520 aa).

The Pyruvate carboxyltransferase domain occupies 5 to 267 (VIIFDTTLRD…HTNINHQEIY (263 aa)). 4 residues coordinate Mn(2+): Asp-14, His-202, His-204, and Asn-238. The interval 392 to 520 (RLDYFSVQSG…RLQQNNQEMV (129 aa)) is regulatory domain.

This sequence belongs to the alpha-IPM synthase/homocitrate synthase family. LeuA type 1 subfamily. In terms of assembly, homodimer. The cofactor is Mn(2+).

Its subcellular location is the cytoplasm. It carries out the reaction 3-methyl-2-oxobutanoate + acetyl-CoA + H2O = (2S)-2-isopropylmalate + CoA + H(+). It participates in amino-acid biosynthesis; L-leucine biosynthesis; L-leucine from 3-methyl-2-oxobutanoate: step 1/4. Catalyzes the condensation of the acetyl group of acetyl-CoA with 3-methyl-2-oxobutanoate (2-ketoisovalerate) to form 3-carboxy-3-hydroxy-4-methylpentanoate (2-isopropylmalate). This is 2-isopropylmalate synthase from Yersinia enterocolitica serotype O:8 / biotype 1B (strain NCTC 13174 / 8081).